Reading from the N-terminus, the 58-residue chain is DNA-directed RNA polymerases I, II, and III subunit RPABC4 (58 aa).

Residues cysteine 19, cysteine 22, cysteine 36, and cysteine 39 each contribute to the Zn(2+) site. The segment at 19 to 39 adopts a C4-type zinc-finger fold; that stretch reads CGECHTENEIKSRDPIRCREC.

This sequence belongs to the archaeal Rpo12/eukaryotic RPC10 RNA polymerase subunit family. As to quaternary structure, component of the RNA polymerase I (Pol I), RNA polymerase II (Pol II) and RNA polymerase III (Pol III) complexes consisting of at least 13, 12 and 17 subunits, respectively. Pol I complex consists of a ten-subunit catalytic core composed of POLR1A/RPA1, POLR1B/RPA2, POLR1C/RPAC1, POLR1D/RPAC2, POLR1H/RPA12, POLR2E/RPABC1, POLR2F/RPABC2, POLR2H/RPABC3, POLR2K/RPABC4 and POLR2L/RPABC5; a mobile stalk subunit POLR1F/RPA43 protruding from the core and additional subunits homologous to general transcription factors POLR1E/RPA49 and POLR1G/RPA34. Part of Pol I pre-initiation complex (PIC), in which Pol I core assembles with RRN3 and promoter-bound UTBF and SL1/TIF-IB complex. Pol II complex contains a ten-subunit catalytic core composed of POLR2A/RPB1, POLR2B/RPB2, POLR2C/RPB3, POLR2I/RPB9, POLR2J/RPB11, POLR2E/RPABC1, POLR2F/RPABC2, POLR2H/RPABC3, POLR2K/RPABC4 and POLR2L/RPABC5 and a mobile stalk composed of two subunits POLR2D/RPB4 and POLR2G/RPB7. Part of Pol II(G) complex, in which Pol II core associates with an additional subunit POLR2M; unlike conventional Pol II, Pol II(G) functions as a transcriptional repressor. Part of TBP-based Pol II pre-initiation complex (PIC), in which Pol II core assembles with general transcription factors and other specific initiation factors including GTF2E1, GTF2E2, GTF2F1, GTF2F2, TCEA1, ERCC2, ERCC3, GTF2H2, GTF2H3, GTF2H4, GTF2H5, GTF2A1, GTF2A2, GTF2B and TBP; this large multi-subunit PIC complex mediates DNA unwinding and targets Pol II core to the transcription start site where the first phosphodiester bond forms. Pol III complex consists of a ten-subunit catalytic core composed of POLR3A/RPC1, POLR3B/RPC2, POLR1C/RPAC1, POLR1D/RPAC2, POLR3K/RPC10, POLR2E/RPABC1, POLR2F/RPABC2, POLR2H/RPABC3, POLR2K/RPABC4 and POLR2L/RPABC5; a mobile stalk composed of two subunits POLR3H/RPC8 and CRCP/RPC9, protruding from the core and functioning primarily in transcription initiation; and additional subunits homologous to general transcription factors of the RNA polymerase II machinery, POLR3C/RPC3-POLR3F/RPC6-POLR3G/RPC7 heterotrimer required for transcription initiation and POLR3D/RPC4-POLR3E/RPC5 heterodimer involved in both transcription initiation and termination.

The protein localises to the nucleus. The protein resides in the nucleolus. Functionally, DNA-dependent RNA polymerase catalyzes the transcription of DNA into RNA using the four ribonucleoside triphosphates as substrates. Common component of RNA polymerases I, II and III which synthesize ribosomal RNA precursors, mRNA precursors and many functional non-coding RNAs, and a small RNAs, such as 5S rRNA and tRNAs, respectively. The chain is DNA-directed RNA polymerases I, II, and III subunit RPABC4 (POLR2K) from Bos taurus (Bovine).